The following is a 170-amino-acid chain: Cytochrome c-type biogenesis protein CcmE (170 aa).

Topologically, residues 1–7 (MTRKQRR) are cytoplasmic. Residues 8–28 (LTIIGGALFVLAVAAGLVLNA) traverse the membrane as a helical; Signal-anchor for type II membrane protein segment. The Periplasmic segment spans residues 29-170 (LRDSIVFFST…GEKTAAGATQ (142 aa)). Residues histidine 122 and tyrosine 126 each coordinate heme. Positions 137–146 (KQGHWKDDYG) are enriched in basic and acidic residues. Residues 137-170 (KQGHWKDDYGKPQAAKPGPVSMREGEKTAAGATQ) are disordered.

Belongs to the CcmE/CycJ family.

The protein localises to the cell inner membrane. Its function is as follows. Heme chaperone required for the biogenesis of c-type cytochromes. Transiently binds heme delivered by CcmC and transfers the heme to apo-cytochromes in a process facilitated by CcmF and CcmH. In Bradyrhizobium sp. (strain BTAi1 / ATCC BAA-1182), this protein is Cytochrome c-type biogenesis protein CcmE.